A 138-amino-acid chain; its full sequence is Putative pre-16S rRNA nuclease (138 aa).

Belongs to the YqgF nuclease family.

The protein resides in the cytoplasm. In terms of biological role, could be a nuclease involved in processing of the 5'-end of pre-16S rRNA. This is Putative pre-16S rRNA nuclease from Salmonella arizonae (strain ATCC BAA-731 / CDC346-86 / RSK2980).